Consider the following 79-residue polypeptide: UPF0180 protein BCG9842_B3897 (79 aa).

The protein belongs to the UPF0180 family.

This is UPF0180 protein BCG9842_B3897 from Bacillus cereus (strain G9842).